A 1145-amino-acid chain; its full sequence is DNA-directed RNA polymerase subunit beta (1145 aa).

Over residues 1101-1112 the composition is skewed to basic and acidic residues; sequence LPEERRVSSSKE. Positions 1101–1145 are disordered; the sequence is LPEERRVSSSKEEIEEEEEVEDNSDEFDETFLEEAEDDFSLDDED. Residues 1113–1145 are compositionally biased toward acidic residues; it reads EIEEEEEVEDNSDEFDETFLEEAEDDFSLDDED.

The protein belongs to the RNA polymerase beta chain family. In terms of assembly, the RNAP catalytic core consists of 2 alpha, 1 beta, 1 beta' and 1 omega subunit. When a sigma factor is associated with the core the holoenzyme is formed, which can initiate transcription.

It carries out the reaction RNA(n) + a ribonucleoside 5'-triphosphate = RNA(n+1) + diphosphate. Its function is as follows. DNA-dependent RNA polymerase catalyzes the transcription of DNA into RNA using the four ribonucleoside triphosphates as substrates. The chain is DNA-directed RNA polymerase subunit beta from Desulforamulus reducens (strain ATCC BAA-1160 / DSM 100696 / MI-1) (Desulfotomaculum reducens).